The following is a 504-amino-acid chain: Putative pentatricopeptide repeat-containing protein At3g28640 (504 aa).

PPR repeat units lie at residues 77-107, 115-149, 151-181, 182-216, 217-251, 253-287, 288-319, 320-350, and 356-390; these read NSFVYDTMIRICSRSSQPHLGLRYFLLMVKE, SYLTFHFLIVACLKACFFSVGKQIHCWVVKNGVFL, DSHVQTGVLRIYVEDKLLLDARKVFDEIPQP, DVVKWDVLMNGYVRCGLGSEGLEVFREMLVKGLEP, DEFSVTTALTACAQVGALAQGKWIHEFVKKKSWIE, DVFVGTALVDMYAKCGCIETAVEVFKKLTRRNVFS, WAALIGGYAAYGYAKKAMTCLERLEREDGIKP, DSVVLLGVLAACAHGGFLEEGRSMLENMEAR, and KHEHYSCIVDLMCRAGRLDDALNLIEKMPMKPLAS. The tract at residues 391–470 is type E motif; sequence VWGALLNGCR…TPGWSVLEVD (80 aa). The type E(+) motif stretch occupies residues 471–501; sequence GNVTKFVSGDVSHPNLLQIHTVIHLLSVDAL.

The protein belongs to the PPR family. PCMP-E subfamily.

This Arabidopsis thaliana (Mouse-ear cress) protein is Putative pentatricopeptide repeat-containing protein At3g28640 (PCMP-E79).